Reading from the N-terminus, the 372-residue chain is Adaptive-response sensory-kinase SasA (372 aa).

One can recognise a Histidine kinase domain in the interval 147–360 (MVAHELRTPL…CFHFTVPVWQ (214 aa)). Residue His-150 is modified to Phosphohistidine; by autocatalysis.

Homooligomerizes. Interacts with KaiC. Participates in the KaiBC complex, whose core is composed of a KaiC homohexamer and 6 KaiB.

It carries out the reaction ATP + protein L-histidine = ADP + protein N-phospho-L-histidine.. Its function is as follows. Member of the two-component regulatory system SasA/RpaA involved in genome-wide circadian gene expression. One of several clock output pathways. Participates in the Kai clock protein complex, the main circadian regulator in cyanobacteria, via its interaction with KaiC. KaiC enhances the autophosphorylation activity of SasA, which then transfers its phosphate group to RpaA to activate it. In addition to its output function, recruits fold-shifted KaiB (KaiB(fs)) to KaiC to cooperatively form the KaiB(6):KaiC(6) complex (independent of SasA kinase activity). Required for robustness of the circadian rhythm of gene expression and is involved in clock output, also required for adaptation to light/dark cycles. This chain is Adaptive-response sensory-kinase SasA, found in Prochlorococcus marinus subsp. pastoris (strain CCMP1986 / NIES-2087 / MED4).